The following is a 1175-amino-acid chain: DNA-directed RNA polymerase subunit beta (1175 aa).

The disordered stretch occupies residues 1–24 (MEGSLLVASSASNNETANNVESTD). Residues 7–23 (VASSASNNETANNVEST) are compositionally biased toward low complexity.

It belongs to the RNA polymerase beta chain family. The RNAP catalytic core consists of 2 alpha, 1 beta, 1 beta' and 1 omega subunit. When a sigma factor is associated with the core the holoenzyme is formed, which can initiate transcription.

It catalyses the reaction RNA(n) + a ribonucleoside 5'-triphosphate = RNA(n+1) + diphosphate. Functionally, DNA-dependent RNA polymerase catalyzes the transcription of DNA into RNA using the four ribonucleoside triphosphates as substrates. This is DNA-directed RNA polymerase subunit beta from Renibacterium salmoninarum (strain ATCC 33209 / DSM 20767 / JCM 11484 / NBRC 15589 / NCIMB 2235).